The chain runs to 566 residues: Medium-chain fatty-acid--CoA ligase (566 aa).

231 to 242 serves as a coordination point for ATP; that stretch reads ILASERAYCARL.

The protein belongs to the ATP-dependent AMP-binding enzyme family. In terms of assembly, homodimer. It depends on Mg(2+) as a cofactor.

It localises to the cell membrane. It catalyses the reaction hexanoate + ATP + CoA = hexanoyl-CoA + AMP + diphosphate. The enzyme catalyses octanoate + ATP + CoA = octanoyl-CoA + AMP + diphosphate. The catalysed reaction is dodecanoate + ATP + CoA = dodecanoyl-CoA + AMP + diphosphate. The protein operates within lipid metabolism; fatty acid beta-oxidation. Functionally, catalyzes the esterification, concomitant with transport, of exogenous fatty acids into metabolically active CoA thioesters for subsequent degradation or incorporation into phospholipids. Is maximally active on C6:0, C8:0 and C12:0 fatty acids, while has a low activity on C14-C18 chain length fatty acids. Is involved in the anaerobic beta-oxidative degradation of fatty acids, which allows anaerobic growth of E.coli on fatty acids as a sole carbon and energy source in the presence of nitrate or fumarate as a terminal electron acceptor. Can functionally replace FadD under anaerobic conditions. This chain is Medium-chain fatty-acid--CoA ligase, found in Escherichia coli (strain K12).